Reading from the N-terminus, the 621-residue chain is Ubiquitin carboxyl-terminal hydrolase MINDY-2 (621 aa).

2 disordered regions span residues 1-106 (MESS…RGQY) and 119-179 (VGHE…LESF). Phosphoserine is present on serine 94. Over residues 145–163 (AAGSEEPSSAGGLSSSCSD) the composition is skewed to low complexity. The active-site Nucleophile is the cysteine 266. Residue histidine 448 is the Proton acceptor of the active site. Residues 507–559 (GQQDQIDQDYLMALSLQQEQQSQEINWEQIPEGISDLELAKKLQEEEDRRASQ) are ubiquitin-binding domain (UBD). The interval 556–621 (RASQYYQEQE…EKEKNSCVIL (66 aa)) is disordered. Low complexity predominate over residues 558–591 (SQYYQEQEQAAAAAAAASTQAQQGQPAQASPSSG). Basic and acidic residues predominate over residues 597–621 (SERKRKEPREKDKEKEKEKNSCVIL).

This sequence belongs to the MINDY deubiquitinase family. FAM63 subfamily.

The catalysed reaction is Thiol-dependent hydrolysis of ester, thioester, amide, peptide and isopeptide bonds formed by the C-terminal Gly of ubiquitin (a 76-residue protein attached to proteins as an intracellular targeting signal).. Its function is as follows. Hydrolase that can remove 'Lys-48'-linked conjugated ubiquitin from proteins. Binds to polyubiquitin chains of different linkage types, including 'Lys-6', 'Lys-11', 'Lys-29', 'Lys-33', 'Lys-48' and 'Lys-63'. May play a regulatory role at the level of protein turnover. This is Ubiquitin carboxyl-terminal hydrolase MINDY-2 from Homo sapiens (Human).